Reading from the N-terminus, the 212-residue chain is Protein Thf1 (212 aa).

A coiled-coil region spans residues 179–201 (ERMEQAVELMQETLAADRRKKEK).

It belongs to the THF1 family.

May be involved in photosynthetic membrane biogenesis. In Parasynechococcus marenigrum (strain WH8102), this protein is Protein Thf1.